The primary structure comprises 260 residues: HTH-type transcriptional repressor NanR (260 aa).

Positions 27–95 (KKLSEMVEEE…NGERARISRP (69 aa)) constitute an HTH gntR-type domain. The segment at residues 55–74 (ERELMAFFNVGRPSVREALA) is a DNA-binding region (H-T-H motif).

Belongs to the NanR family.

Functionally, transcriptional repressor that controls expression of the genes required for the catabolism of sialic acids. In Edwardsiella tarda (strain FL6-60), this protein is HTH-type transcriptional repressor NanR.